We begin with the raw amino-acid sequence, 309 residues long: uncharacterized protein (309 aa).

The 60-residue stretch at 1–60 (MKPLLDVLMILDALEKEGSFAAASAKLYKTPSALSYTVHKLESDLNIQLLDRSGHRAKFT) folds into the HTH lysR-type domain. Residues 20–39 (FAAASAKLYKTPSALSYTVH) constitute a DNA-binding region (H-T-H motif).

It belongs to the LysR transcriptional regulatory family.

This is an uncharacterized protein from Escherichia coli (strain K12).